Consider the following 269-residue polypeptide: Protein BASIC PENTACYSTEINE3 (269 aa).

The protein belongs to the BBR/BPC family. In terms of tissue distribution, expressed in seedlings, leaves and pistils. Detected in the base of flowers and tips of carpels, in petal vasculature, in anthers, in young rosette, in the lateral and primary roots, and in the gynobasal portion of the ovule.

Its subcellular location is the nucleus. Its function is as follows. Transcriptional regulator that specifically binds to GA-rich elements (GAGA-repeats) present in regulatory sequences of genes involved in developmental processes. This is Protein BASIC PENTACYSTEINE3 (BPC3) from Arabidopsis thaliana (Mouse-ear cress).